We begin with the raw amino-acid sequence, 23 residues long: Apolipophorin-3 (23 aa).

Belongs to the insect apolipophorin-3 family. As to quaternary structure, equilibrium between a soluble monomer and a bound lipoprotein form. Apolipophorin-3 associates with lipophorin during lipid loading until each particle contains 9 or 14 molecules of apolipophorin-3. Hemolymph.

It localises to the secreted. Functionally, assists in the loading of diacylglycerol, generated from triacylglycerol stores in the fat body through the action of adipokinetic hormone, into lipophorin, the hemolymph lipoprotein. It increases the lipid carrying capacity of lipophorin by covering the expanding hydrophobic surface resulting from diacylglycerol uptake. It thus plays a critical role in the transport of lipids during flight in several species of insects. The protein is Apolipophorin-3 of Melanoplus sanguinipes (Migratory grasshopper).